The following is a 186-amino-acid chain: Potassium-transporting ATPase KdpC subunit 1 (186 aa).

Residues 10 to 30 (LTIITMVLCGFLFPLAITLIG) traverse the membrane as a helical segment.

This sequence belongs to the KdpC family. In terms of assembly, the system is composed of three essential subunits: KdpA, KdpB and KdpC.

Its subcellular location is the cell membrane. Functionally, part of the high-affinity ATP-driven potassium transport (or Kdp) system, which catalyzes the hydrolysis of ATP coupled with the electrogenic transport of potassium into the cytoplasm. This subunit acts as a catalytic chaperone that increases the ATP-binding affinity of the ATP-hydrolyzing subunit KdpB by the formation of a transient KdpB/KdpC/ATP ternary complex. The sequence is that of Potassium-transporting ATPase KdpC subunit 1 from Staphylococcus aureus (strain Mu50 / ATCC 700699).